The chain runs to 489 residues: Probable cytochrome P450 522A1 (489 aa).

Residues 1–21 traverse the membrane as a helical segment; that stretch reads MILTIVIIILTVIFVNKYLLN. A heme-binding site is contributed by C433.

Belongs to the cytochrome P450 family. It depends on heme as a cofactor.

It is found in the membrane. The protein is Probable cytochrome P450 522A1 (cyp522A1) of Dictyostelium discoideum (Social amoeba).